The primary structure comprises 893 residues: Pentatricopeptide repeat-containing protein At5g52850, chloroplastic (893 aa).

PPR repeat units follow at residues 57–87, 88–122, 123–157, 158–188, 189–223, 224–257, 258–288, 289–323, 324–358, 359–390, 391–425, 426–460, 461–491, 492–526, 527–561, 562–592, 593–627, 628–658, and 664–694; these read NLDL…MSHR, TVFA…GTHP, NEFT…GFEG, NSVV…LQNA, DTIS…GVPP, NEFT…GIPL, NVVL…SGEQ, DVFL…GLQP, NNFT…GFED, STDV…MVSP, NVVS…EVEP, NVVT…HVDG, EMVV…MKRR, DNIT…GIRM, DQLS…GFSG, AASV…IATP, DVVS…ETEP, DSVT…MKKI, and QVEH…MHLK. The interval 699 to 774 is type E motif; sequence IFKTLLRACR…KLGKSTVEVQ (76 aa). The interval 775 to 806 is type E(+) motif; the sequence is GKVHSFVSEDVTRVDKTNGIYAEIESIKEEIK. Positions 807-893 are type DYW motif; sequence RFGSPYRGNE…SCKREETSFV (87 aa).

This sequence belongs to the PPR family. PCMP-H subfamily.

It is found in the plastid. The protein resides in the chloroplast. The sequence is that of Pentatricopeptide repeat-containing protein At5g52850, chloroplastic (PCMP-H31) from Arabidopsis thaliana (Mouse-ear cress).